The sequence spans 81 residues: Acyl carrier protein (81 aa).

Residues 2–77 (ASIEERVVDI…EAIDFIEKEK (76 aa)) form the Carrier domain. Residue Ser-37 is modified to O-(pantetheine 4'-phosphoryl)serine.

Belongs to the acyl carrier protein (ACP) family. In terms of processing, 4'-phosphopantetheine is transferred from CoA to a specific serine of apo-ACP by AcpS. This modification is essential for activity because fatty acids are bound in thioester linkage to the sulfhydryl of the prosthetic group.

Its subcellular location is the cytoplasm. Its pathway is lipid metabolism; fatty acid biosynthesis. In terms of biological role, carrier of the growing fatty acid chain in fatty acid biosynthesis. The protein is Acyl carrier protein of Rhodopirellula baltica (strain DSM 10527 / NCIMB 13988 / SH1).